The primary structure comprises 189 residues: Transmembrane protein 229b (189 aa).

Topologically, residues 1 to 17 are cytoplasmic; it reads MATTVTPEPLTALSRWY. A helical transmembrane segment spans residues 18-38; the sequence is LYAIHGYFCEVMFTAAWEFVV. Topologically, residues 39 to 43 are extracellular; sequence NCNWK. The chain crosses the membrane as a helical span at residues 44 to 64; the sequence is FPGVTSVWALFIYGTCILIVE. Residues 65–75 are Cytoplasmic-facing; the sequence is RMYLCLKDRCN. Residues 76–96 form a helical membrane-spanning segment; sequence VLLRCIIYTLWTYFWEFGTGF. At 97-114 the chain is on the extracellular side; the sequence is LLRQFNACPWDYSEFKYN. Residues 115–135 form a helical membrane-spanning segment; sequence FMGLITAEYAVPWFCASFIVE. The Cytoplasmic segment spans residues 136–189; the sequence is RLVIRNTLRLRFDEVAESGQAEERLDRGGGGRGGRRGRGARAGATSANGYVKVD. Residues 158 to 189 are disordered; sequence ERLDRGGGGRGGRRGRGARAGATSANGYVKVD.

The protein belongs to the TMEM229 family.

The protein resides in the membrane. This chain is Transmembrane protein 229b (tmem229b), found in Danio rerio (Zebrafish).